The sequence spans 466 residues: Soluble pyridine nucleotide transhydrogenase (466 aa).

36-45 (ERYQNVGGGC) contacts FAD.

It belongs to the class-I pyridine nucleotide-disulfide oxidoreductase family. It depends on FAD as a cofactor.

It localises to the cytoplasm. The enzyme catalyses NAD(+) + NADPH = NADH + NADP(+). Functionally, conversion of NADPH, generated by peripheral catabolic pathways, to NADH, which can enter the respiratory chain for energy generation. The chain is Soluble pyridine nucleotide transhydrogenase from Escherichia coli O9:H4 (strain HS).